Reading from the N-terminus, the 189-residue chain is Receptor activity-modifying protein 2 (189 aa).

The first 44 residues, 1 to 44, serve as a signal peptide directing secretion; the sequence is MAPLRVERAPGGSRLGVTRAQRPTALCLPPLLLLLLLLLGAVSA. Residues 45 to 157 are Extracellular-facing; that stretch reads SPESLNQSLP…VQPTFSDPPE (113 aa). Positions 49–61 are enriched in polar residues; sequence LNQSLPESQNQSH. Residues 49 to 69 form a disordered region; it reads LNQSLPESQNQSHPTEDSLVS. Asn50, Asn58, Asn99, and Asn144 each carry an N-linked (GlcNAc...) asparagine glycan. Intrachain disulfides connect Cys83/Cys113 and Cys98/Cys145. The helical transmembrane segment at 158-179 threads the bilayer; that stretch reads DVLLAMIIAPICLIPFLVTLVV. The Cytoplasmic segment spans residues 180–189; sequence WRSKDSDAQA.

This sequence belongs to the RAMP family. In terms of assembly, heterodimer of CALCRL and RAMP2; the interaction forms the receptor complex for adrenomedullin/ADM. Heterodimer of CALCR and RAMP2; interaction forms the AMYR2 receptor complex for calcitonin/CALC and amylin/IAPP. In terms of tissue distribution, ubiquitous. Expressed predominantly in embryonic brain, lung and gut and in adult heart, lung, skeletal muscle and brain.

Its subcellular location is the cell membrane. Accessory protein that interacts with and modulates the function of G-protein coupled receptors including calcitonin gene-related peptide type 1 receptor (CALCRL) and calcitonin receptor (CALCR). Required for the transport of CALCRL to the plasma membrane. Together with CALCRL, form a receptor complex for adrenomedullin/ADM. Together with CALCR, act as a receptor complex for calcitonin/CT/CALC. Together with CALCR, also act as a receptor complex for amylin/IAPP. This chain is Receptor activity-modifying protein 2, found in Mus musculus (Mouse).